Consider the following 158-residue polypeptide: Sporulation-delaying protein SdpA (158 aa).

It is found in the cytoplasm. Functionally, required for the maturation of SdpC to SDP. Not required for SdpC signal peptide cleavage, secretion from the cell or disulfide bond formation. In Bacillus subtilis (strain 168), this protein is Sporulation-delaying protein SdpA.